The following is a 101-amino-acid chain: Urease subunit beta (101 aa).

The protein belongs to the urease beta subunit family. Heterotrimer of UreA (gamma), UreB (beta) and UreC (alpha) subunits. Three heterotrimers associate to form the active enzyme.

It is found in the cytoplasm. It catalyses the reaction urea + 2 H2O + H(+) = hydrogencarbonate + 2 NH4(+). The protein operates within nitrogen metabolism; urea degradation; CO(2) and NH(3) from urea (urease route): step 1/1. The polypeptide is Urease subunit beta (Dechloromonas aromatica (strain RCB)).